Reading from the N-terminus, the 90-residue chain is 10.1 kDa protein (90 aa).

This is 10.1 kDa protein from Pseudomonas aeruginosa (Bacteriophage Pf1).